Here is a 131-residue protein sequence, read N- to C-terminus: Methylglyoxal synthase (131 aa).

Positions 1-131 (MKIALIAHDK…GDLDYRKFRK (131 aa)) constitute an MGS-like domain. Residues histidine 8, lysine 12, 34-37 (TGTT), and 54-55 (SG) each bind substrate. Catalysis depends on aspartate 60, which acts as the Proton donor/acceptor. Residue histidine 87 coordinates substrate.

Belongs to the methylglyoxal synthase family.

It carries out the reaction dihydroxyacetone phosphate = methylglyoxal + phosphate. Catalyzes the formation of methylglyoxal from dihydroxyacetone phosphate. This chain is Methylglyoxal synthase, found in Bacillus cytotoxicus (strain DSM 22905 / CIP 110041 / 391-98 / NVH 391-98).